Here is a 171-residue protein sequence, read N- to C-terminus: Adenine phosphoribosyltransferase (171 aa).

This sequence belongs to the purine/pyrimidine phosphoribosyltransferase family. As to quaternary structure, homodimer.

Its subcellular location is the cytoplasm. It carries out the reaction AMP + diphosphate = 5-phospho-alpha-D-ribose 1-diphosphate + adenine. The protein operates within purine metabolism; AMP biosynthesis via salvage pathway; AMP from adenine: step 1/1. Its function is as follows. Catalyzes a salvage reaction resulting in the formation of AMP, that is energically less costly than de novo synthesis. This Mycoplasma mobile (strain ATCC 43663 / 163K / NCTC 11711) (Mesomycoplasma mobile) protein is Adenine phosphoribosyltransferase.